A 276-amino-acid polypeptide reads, in one-letter code: 5-deoxy-glucuronate isomerase (276 aa).

This sequence belongs to the isomerase IolB family.

The catalysed reaction is 5-deoxy-D-glucuronate = 5-dehydro-2-deoxy-D-gluconate. It participates in polyol metabolism; myo-inositol degradation into acetyl-CoA; acetyl-CoA from myo-inositol: step 4/7. Functionally, involved in the isomerization of 5-deoxy-glucuronate (5DG) to 5-dehydro-2-deoxy-D-gluconate (DKG or 2-deoxy-5-keto-D-gluconate). The polypeptide is 5-deoxy-glucuronate isomerase (Geobacillus kaustophilus (strain HTA426)).